The primary structure comprises 619 residues: 1-deoxy-D-xylulose-5-phosphate synthase (619 aa).

Thiamine diphosphate contacts are provided by residues His-80 and 121–123 (GHS). Asp-152 is a binding site for Mg(2+). Residues 153–154 (GA), Asn-181, Tyr-288, and Glu-370 contribute to the thiamine diphosphate site. Residue Asn-181 coordinates Mg(2+).

It belongs to the transketolase family. DXPS subfamily. As to quaternary structure, homodimer. It depends on Mg(2+) as a cofactor. Thiamine diphosphate is required as a cofactor.

The catalysed reaction is D-glyceraldehyde 3-phosphate + pyruvate + H(+) = 1-deoxy-D-xylulose 5-phosphate + CO2. It participates in metabolic intermediate biosynthesis; 1-deoxy-D-xylulose 5-phosphate biosynthesis; 1-deoxy-D-xylulose 5-phosphate from D-glyceraldehyde 3-phosphate and pyruvate: step 1/1. Its function is as follows. Catalyzes the acyloin condensation reaction between C atoms 2 and 3 of pyruvate and glyceraldehyde 3-phosphate to yield 1-deoxy-D-xylulose-5-phosphate (DXP). The sequence is that of 1-deoxy-D-xylulose-5-phosphate synthase from Yersinia pseudotuberculosis serotype I (strain IP32953).